Reading from the N-terminus, the 52-residue chain is MPQLSPINGFVILCSISLMLLTLLINGHFMLKPISSLTTPKLKMAYIKKLYF.

A helical transmembrane segment spans residues proline 6–asparagine 26.

This sequence belongs to the ATPase protein 8 family. As to quaternary structure, F-type ATPases have 2 components, CF(1) - the catalytic core - and CF(0) - the membrane proton channel.

Its subcellular location is the mitochondrion membrane. Functionally, mitochondrial membrane ATP synthase (F(1)F(0) ATP synthase or Complex V) produces ATP from ADP in the presence of a proton gradient across the membrane which is generated by electron transport complexes of the respiratory chain. F-type ATPases consist of two structural domains, F(1) - containing the extramembraneous catalytic core and F(0) - containing the membrane proton channel, linked together by a central stalk and a peripheral stalk. During catalysis, ATP synthesis in the catalytic domain of F(1) is coupled via a rotary mechanism of the central stalk subunits to proton translocation. Part of the complex F(0) domain. Minor subunit located with subunit a in the membrane. The protein is ATP synthase protein 8 (MT-ATP8) of Albinaria turrita (Door snail).